The sequence spans 287 residues: Immunoglobulin alpha Fc receptor (287 aa).

The signal sequence occupies residues 1–21 (MDPKQTTLLCLVLCLGQRIQA). Topologically, residues 22 to 227 (QEGDFPMPFI…SIHQDYTTQN (206 aa)) are extracellular. 2 consecutive Ig-like C2-type domains span residues 42–107 (DGSV…IGHY) and 139–200 (GENI…YNRS). Cysteine 49 and cysteine 100 form a disulfide bridge. 5 N-linked (GlcNAc...) asparagine glycosylation sites follow: asparagine 65, asparagine 79, asparagine 141, asparagine 177, and asparagine 186. An intrachain disulfide couples cysteine 146 to cysteine 193. A helical membrane pass occupies residues 228 to 246 (LIRMAVAGLVLVALLAILV). The Cytoplasmic segment spans residues 247 to 287 (ENWHSHTALNKEASADVAEPSWSQQMCQPGLTFARTPSVCK).

In terms of assembly, associates with the Fc epsilon RI gamma 2 receptor inducing tyrosine phosphorylation of gamma 2. As to quaternary structure, (Microbial infection) Interacts with Staphylococcus aureus protein SSL11. As to expression, isoform A.1, isoform A.2 and isoform A.3 are differentially expressed between blood and mucosal myeloid cells. Isoform A.1, isoform A.2 and isoform A.3 are expressed in monocytes. Isoform A.1 and isoform A.2 are expressed in alveolar macrophages; however only one isoform is expressed at alveolar macrophages surfaces.

It localises to the cell membrane. The protein localises to the secreted. Binds to the Fc region of immunoglobulins alpha. Mediates several functions including cytokine production. The sequence is that of Immunoglobulin alpha Fc receptor (FCAR) from Homo sapiens (Human).